Reading from the N-terminus, the 475-residue chain is Methyltransferase-like protein 25B (475 aa).

The stretch at glutamine 186–asparagine 210 forms a coiled coil. Residues valine 406 to leucine 426 form a helical membrane-spanning segment.

Belongs to the METTL25 family.

Its subcellular location is the membrane. The polypeptide is Methyltransferase-like protein 25B (Bos taurus (Bovine)).